Consider the following 741-residue polypeptide: Pentatricopeptide repeat-containing protein At1g05670, mitochondrial (741 aa).

A mitochondrion-targeting transit peptide spans 1–21 (MKKPFTGLLMKRGTLSSFRNF). PPR repeat units lie at residues 174 to 208 (DPRVFDVFFQVLVDFGLLREARRVFEKMLNYGLVL), 209 to 244 (SVDSCNVYLTRLSKDCYKTATAIIVFREFPEVGVCW), 245 to 279 (NVASYNIVIHFVCQLGRIKEAHHLLLLMELKGYTP), 280 to 314 (DVISYSTVVNGYCRFGELDKVWKLIEVMKRKGLKP), 315 to 349 (NSYIYGSIIGLLCRICKLAEAEEAFSEMIRQGILP), 350 to 384 (DTVVYTTLIDGFCKRGDIRAASKFFYEMHSRDITP), 385 to 419 (DVLTYTAIISGFCQIGDMVEAGKLFHEMFCKGLEP), 420 to 454 (DSVTFTELINGYCKAGHMKDAFRVHNHMIQAGCSP), 455 to 489 (NVVTYTTLIDGLCKEGDLDSANELLHEMWKIGLQP), 490 to 524 (NIFTYNSIVNGLCKSGNIEEAVKLVGEFEAAGLNA), 525 to 559 (DTVTYTTLMDAYCKSGEMDKAQEILKEMLGKGLQP), 560 to 594 (TIVTFNVLMNGFCLHGMLEDGEKLLNWMLAKGIAP), 595 to 629 (NATTFNSLVKQYCIRNNLKAATAIYKDMCSRGVGP), 630 to 664 (DGKTYENLVKGHCKARNMKEAWFLFQEMKGKGFSV), and 665 to 699 (SVSTYSVLIKGFLKRKKFLEAREVFDQMRREGLAA).

This sequence belongs to the PPR family. P subfamily.

Its subcellular location is the mitochondrion. This is Pentatricopeptide repeat-containing protein At1g05670, mitochondrial from Arabidopsis thaliana (Mouse-ear cress).